Here is a 354-residue protein sequence, read N- to C-terminus: MIRIAIDCMGGDFGLPVTIPAAIEFARQFPDSRLLLVGLPEAIEAALAEHKAAPRDRFEIVPATEVVSMDDPVEIALRRKKDSSMRLAAQAVKDGRADACVSAGNTGAWMAISRYVLKTLDGIDRPAIATSIPNQTGRATTVLDLGANVDCTAEHLLQFAIMGTALTQAVDHRDNPTVGLLNIGEEVIKGNEVVKEAAELLRRSPLNFRGNVEGNDIFKGTVDVVVCDGFVGNVVLKSVEGLAKMLSSVIREEFQRNLVTLLAGAIAKPVLNRLRNRVDNRRYNGAALLGLRGVVIKSHGSADVYAYGFALQRAREAVVSKLQERTAQAVALITQRVQMGEAAAGEPEAAGDTV.

The protein belongs to the PlsX family. As to quaternary structure, homodimer. Probably interacts with PlsY.

Its subcellular location is the cytoplasm. It carries out the reaction a fatty acyl-[ACP] + phosphate = an acyl phosphate + holo-[ACP]. The protein operates within lipid metabolism; phospholipid metabolism. Catalyzes the reversible formation of acyl-phosphate (acyl-PO(4)) from acyl-[acyl-carrier-protein] (acyl-ACP). This enzyme utilizes acyl-ACP as fatty acyl donor, but not acyl-CoA. This is Phosphate acyltransferase from Bordetella petrii (strain ATCC BAA-461 / DSM 12804 / CCUG 43448).